Reading from the N-terminus, the 1186-residue chain is Atrophin-1 (1186 aa).

Disordered regions lie at residues 1–604 (MKTR…PTVT), 618–763 (ASSP…ARFN), and 781–858 (VPLE…HRPP). The Nuclear localization signal motif lies at 16-32 (RKKEAPGPREELRSRGR). Positions 17-29 (KKEAPGPREELRS) are enriched in basic and acidic residues. S34 is modified (phosphoserine). Over residues 45-63 (GKAEKSRQTAKKARVEEAS) the composition is skewed to basic and acidic residues. Phosphoserine occurs at positions 77, 79, 100, 102, and 106. Over residues 107–127 (LDGRSLNDDGSSDPRDIDQDN) the composition is skewed to basic and acidic residues. Residues 128–151 (RSTSPSIYSPGSVENDSDSSSGLS) are compositionally biased toward polar residues. Residues 157 to 173 (PYHPPPLFPPSPQPPDS) are compositionally biased toward pro residues. Low complexity-rich tracts occupy residues 258–270 (PISV…SGAP), 349–365 (PTLA…SSSA), and 375–396 (SSSS…SSAS). Residues 416–437 (SLSVSNQPPKYTQPSLPSQAVW) are compositionally biased toward polar residues. Positions 484-503 (QQQQQQQQQQQQQQQHHGNS) are enriched in low complexity. The segment at 513–563 (HPLEGGSSHHAHPYAMSPSLGSLRPYPPGPAHLPPPHSQVSYSQAGPNGPP) is involved in binding BAIAP2. Residues 537 to 549 (PYPPGPAHLPPPH) are compositionally biased toward pro residues. 2 stretches are compositionally biased toward low complexity: residues 565–582 (SSSS…YPCS) and 618–628 (ASSPAGYKTAS). S628 is modified (phosphoserine). An N6-acetyllysine modification is found at K637. Residue T649 is modified to Phosphothreonine. A Phosphoserine modification is found at S657. T665 is modified (phosphothreonine). 2 stretches are compositionally biased toward pro residues: residues 689 to 714 (GPGP…PASG) and 735 to 748 (SPVP…PPPK). Phosphoserine; by MAPK8 is present on S735. 2 positions are modified to phosphoserine: S742 and S744. Basic and acidic residues predominate over residues 791–835 (KRADLVEKVRREAEQRAREEKEREREREREKEREREKERELERSV). The tract at residues 875 to 890 (DTPALRTLSEYARPHV) is required for interaction with FAT1. Residue S892 is modified to Phosphoserine. The Nuclear export signal signature appears at 1029 to 1037 (ALGNDPLAR). R1111 is modified (asymmetric dimethylarginine). A Glycyl lysine isopeptide (Lys-Gly) (interchain with G-Cter in SUMO2) cross-link involves residue K1179.

In terms of assembly, interacts with NR2E1; the interaction represses the transcriptional activity of NR2E1. Interacts with BAIAP2, WWP1, WWP2, WWP3 and RERE. Interacts (via its N-terminus) with MTG8; the interaction enhances transcriptional repression of MTG8. Interacts with FAT1 (via a C-terminal domain). Interacts with PQBP1. Post-translationally, phosphorylated in vitro by MAPK8/JNK1 on Ser-735.

It is found in the nucleus. It localises to the cytoplasm. The protein localises to the perinuclear region. The protein resides in the cell junction. Its function is as follows. Transcriptional corepressor. Corepressor of MTG8 transcriptional repression. Recruits NR2E1 to repress transcription. Has some intrinsic repression activity. Promotes vascular smooth cell (VSMC) migration and orientation. The chain is Atrophin-1 (ATN1) from Pan troglodytes (Chimpanzee).